Consider the following 169-residue polypeptide: Lutropin/choriogonadotropin subunit beta (169 aa).

The first 20 residues, 1 to 20, serve as a signal peptide directing secretion; sequence MEMLQGLLLWMLLSVGGVWA. Disulfide bonds link C29–C77, C43–C92, C46–C130, C54–C108, C58–C110, and C113–C120. N-linked (GlcNAc...) asparagine glycosylation is present at N33. A disordered region spans residues 131–169; sequence APQTSSSCKDPPSQPLTSTSTPTPGASRRSSHPLPINTS. Residues 145-158 show a composition bias toward low complexity; it reads PLTSTSTPTPGASR.

Belongs to the glycoprotein hormones subunit beta family. In terms of assembly, heterodimer of a common alpha chain and a unique beta chain which confers biological specificity to thyrotropin, lutropin, follitropin and gonadotropin.

The protein localises to the secreted. Functionally, promotes spermatogenesis and ovulation by stimulating the testes and ovaries to synthesize steroids. This is Lutropin/choriogonadotropin subunit beta (LHB) from Equus asinus (Donkey).